Reading from the N-terminus, the 380-residue chain is Flap endonuclease 1 (380 aa).

The interval 1–104 is N-domain; that stretch reads MGIQGLAKLI…GELAKRAERR (104 aa). D34 contributes to the Mg(2+) binding site. DNA is bound by residues R47 and R70. Residues D86, E158, E160, D179, and D181 each coordinate Mg(2+). Residues 122 to 253 are I-domain; sequence DVNKFQKRLV…KRAIELIRQY (132 aa). E158 lines the DNA pocket. DNA contacts are provided by G231 and D233. Mg(2+) is bound at residue D233. Residues 328–380 form a disordered region; the sequence is LKNARHTSTQGRLDSFFKVMSSPSVKRKEPPKGAKGSASKKAKMSGGKFKKPK. Residues 336 to 344 form an interaction with PCNA region; the sequence is TQGRLDSFF. Positions 365 to 380 are enriched in basic residues; that stretch reads ASKKAKMSGGKFKKPK.

Belongs to the XPG/RAD2 endonuclease family. FEN1 subfamily. Interacts with PCNA. Three molecules of FEN1 bind to one PCNA trimer with each molecule binding to one PCNA monomer. PCNA stimulates the nuclease activity without altering cleavage specificity. Mg(2+) is required as a cofactor. Phosphorylated. Phosphorylation upon DNA damage induces relocalization to the nuclear plasma.

It is found in the nucleus. Its subcellular location is the nucleolus. The protein resides in the nucleoplasm. It localises to the mitochondrion. Functionally, structure-specific nuclease with 5'-flap endonuclease and 5'-3' exonuclease activities involved in DNA replication and repair. During DNA replication, cleaves the 5'-overhanging flap structure that is generated by displacement synthesis when DNA polymerase encounters the 5'-end of a downstream Okazaki fragment. It enters the flap from the 5'-end and then tracks to cleave the flap base, leaving a nick for ligation. Also involved in the long patch base excision repair (LP-BER) pathway, by cleaving within the apurinic/apyrimidinic (AP) site-terminated flap. Acts as a genome stabilization factor that prevents flaps from equilibrating into structures that lead to duplications and deletions. Also possesses 5'-3' exonuclease activity on nicked or gapped double-stranded DNA, and exhibits RNase H activity. Also involved in replication and repair of rDNA and in repairing mitochondrial DNA. The chain is Flap endonuclease 1 from Branchiostoma floridae (Florida lancelet).